The primary structure comprises 1451 residues: MVSKRSRLDFEDKETLAEDASKIMKQPLSKLAKKSCGSHEVEENGSVFVRLLKASGLTLKTGDNQNQLGVDQIIFQRKLFQALRKHPSYPKVIEEFVNGLESYTEDIDSLRNCLLSCERLQDEEASMGTFYSKSLIKLLLGIDILQPAIIKMLFEKVPQFLFESESRDGISMPRLIISQLKWLDRIVDSKDLTTQMMQLISVAPVNLQHDFITSLPEILGDSQHANVGKELSELLVQNTSLTVPILDVFSSLRLDPNFLSEIRQLVMGKLSSVRLEDLPVIVKFILHSVTDSTSLEVIAELREKLNVQHFTLPSRIQASQSKLKSKGLASSSGNQENSDKDCIVLLFDVIKSAIRYEKTISEAWIKAIERIQSAAEHKALDVAMLLIIYGTSTQTKKGVERLLRNKIQSDCIQEQLLDSTFSTHCLVLKDICPSILLLAQTLFHSQDQRIILFGSLLCKYAFKFFDTYCQQEVVGALVTHVCSGNEAEVDAALDVLLELIVLNASAMRLNAAFIKGILDYLENMSPQQIRKIFCILSTLAFSQQPGTSNHIQDDMHLVIRKQLSSTVFKYKLIGIIGAVTMAGIMAEDRTMPSNSTQRSASVSSEQHTQVTSLLQLVHSCTEHSPWASSLYYDEFANLIQERKLAPKTLEWVAQTIFNDFQDAFVVDFCAVPEGDFPFPVKALYGLEECNTQDGIVINLLPLFFQEFAKDVSQVTSQESSQKSMSPLCLASHFRLLRLCVARQHNGNLDEIDALLDCPLFLPDLEPGEKLESMSAKDRSLMCSLTFLTFNWFREVVNAFCQQTSPEMKGKVLSRLKDLVELQEILEKYLAVIPDYVPPFTSVDLDTLDVIPRSNSAVAAKSRHKGKTGGKKQKADSSTASCTDTLLTEDTSECDVAPSGKSQVDKESTGKEGKTFVSLQNYRAFFRELDIEVFSILHSGLVTKFILDTEMHTEATEVVQLGPAELLFLLEDLSQKLENRLTPSFTKRVCFFKNKGSRNIGFSHLHQRSVQDIVHCVVQLLTPMCNHLENIHNFFQCLGAENLSVNDKARVTAQEHYTMSSCYQKLLQVFHALLAWKGFTHQSNHRLLRSALEVLASRLKQTEEGQPLEELLSQSFSYLQNLQHSIPSFQCGLYLLRLLMALLEKSAVPTQKKEKLASLAKQLLCRAWPHGDKEKNPTFNDHLHDLLCIYLEHTDNVLKAIEEITGVGVPELVNAPKDASSSTFPTLTRHTFVIFFRVMMAELEKTVKGLQAGTATDSQQVHEEKLLYWNMAVRDFSILINLMKVFDSYPVLHVCLKYGRRFVEAFLKQCMPLLDFSFRKHRDDVLSLLQTLQLNTRLLHHLCGHSKIHQDTRLTKHVPLLKKSLELLVCRVKAMLVLNNCREAFWLGTLKNRDLQGEEIISQHPSSPENTSEDSEDGMTSYVSRNRAIEDGEDEANDGQDRDSDESDDSSS.

Positions 1 to 291 (MVSKRSRLDF…VKFILHSVTD (291 aa)) are interaction with FANCE. Phosphoserine is present on Ser-222. Positions 248–359 (VFSSLRLDPN…IKSAIRYEKT (112 aa)) are interaction with BRCA2. Lys-561 participates in a covalent cross-link: Glycyl lysine isopeptide (Lys-Gly) (interchain with G-Cter in ubiquitin). Ser-716 carries the post-translational modification Phosphoserine. The tract at residues 858-879 (AAKSRHKGKTGGKKQKADSSTA) is disordered. Positions 860-871 (KSRHKGKTGGKK) are enriched in basic residues. Ser-1257, Ser-1406, and Ser-1414 each carry phosphoserine. Residues 1399 to 1451 (IISQHPSSPENTSEDSEDGMTSYVSRNRAIEDGEDEANDGQDRDSDESDDSSS) form a disordered region. A compositionally biased stretch (acidic residues) spans 1430–1451 (DGEDEANDGQDRDSDESDDSSS).

Belongs to the Fanconi anemia protein FANCD2 family. In terms of assembly, homodimer; cannot be ubiquitinated and does not bind DNA. Part of a FANCI-FANCD2 heterodimeric complex that binds and scans dsDNA for DNA damage. Interacts directly with FANCE and FANCI. Interacts with USP1 and MEN1. The ubiquitinated form specifically interacts with BRCA1 and BLM. Both the nonubiquitinated and the monoubiquitinated forms interact with BRCA2; this interaction is mediated by phosphorylated FANCG and the complex also includes XCCR3. The ubiquitinated form specifically interacts with MTMR15/FAN1 (via UBZ-type zinc finger), leading to recruit MTMR15/FAN1 to sites of DNA damage. Interacts with DCLRE1B/Apollo. Interacts with POLN. Interacts with UHRF1 and UHRF2; these interactions promote FANCD2 activation. Post-translationally, monoubiquitinated on Lys-561 during S phase and upon genotoxic stress by FANCL in complex with E2 ligases UBE2T or UBE2W. Deubiquitinated by USP1 as cells enter G2/M, or once DNA repair is completed. Monoubiquitination requires the joint intervention of the FANC core complex, including FANCA, FANCB, FANCC, FANCE, FANCF, FANCG, and FANCM, and proteins involved in cell cycle checkpoints and DNA repair, including RPA1, ATR, CHEK1 and BRCA1, and is mediated by FANCL/PHF9. Monoubiquitination prevents DNA release from the FANCI-FANCD2 complex. FANCD2 is only ubiquitinated in the FANCI-FANCD2 complex and the monoubiquitination of FANCD2 is promoted by phosphorylation of FANCI. Ubiquitination is required for binding to chromatin, interaction with BRCA1, BRCA2 and MTMR15/FAN1, DNA repair, and normal cell cycle progression. Phosphorylated on several sites including Ser-222 and Ser-1401 in response to genotoxic stress by ATM and/or ATR.

Its subcellular location is the nucleus. Its function is as follows. Required for maintenance of chromosomal stability. Promotes accurate and efficient pairing of homologs during meiosis. Involved in the repair of DNA double-strand breaks, both by homologous recombination and single-strand annealing. The FANCI-FANCD2 complex binds and scans double-stranded DNA (dsDNA) for DNA damage; this complex stalls at DNA junctions between double-stranded DNA and single-stranded DNA. May participate in S phase and G2 phase checkpoint activation upon DNA damage. Plays a role in preventing breakage and loss of missegregating chromatin at the end of cell division, particularly after replication stress. Promotes BRCA2/FANCD1 loading onto damaged chromatin. May also be involved in B-cell immunoglobulin isotype switching. The chain is Fanconi anemia group D2 protein homolog (Fancd2) from Rattus norvegicus (Rat).